Consider the following 371-residue polypeptide: Aminomethyltransferase (371 aa).

This sequence belongs to the GcvT family. As to quaternary structure, the glycine cleavage system is composed of four proteins: P, T, L and H.

It catalyses the reaction N(6)-[(R)-S(8)-aminomethyldihydrolipoyl]-L-lysyl-[protein] + (6S)-5,6,7,8-tetrahydrofolate = N(6)-[(R)-dihydrolipoyl]-L-lysyl-[protein] + (6R)-5,10-methylene-5,6,7,8-tetrahydrofolate + NH4(+). Its function is as follows. The glycine cleavage system catalyzes the degradation of glycine. This Oceanobacillus iheyensis (strain DSM 14371 / CIP 107618 / JCM 11309 / KCTC 3954 / HTE831) protein is Aminomethyltransferase.